The primary structure comprises 56 residues: MKFFNREKEINKILSIIEGEPNLIYFIYGSLNSGKFNLTEETQFIYSIVVTDGLFS.

Belongs to the archaeal ATPase family.

This is an uncharacterized protein from Methanocaldococcus jannaschii (strain ATCC 43067 / DSM 2661 / JAL-1 / JCM 10045 / NBRC 100440) (Methanococcus jannaschii).